The chain runs to 692 residues: Elongation factor G (692 aa).

In terms of domain architecture, tr-type G spans 8 to 282; that stretch reads AKTRNIGIMA…AVIAYLPSPL (275 aa). Residues 17–24, 81–85, and 135–138 each bind GTP; these read AHVDAGKT, DTPGH, and NKMD.

It belongs to the TRAFAC class translation factor GTPase superfamily. Classic translation factor GTPase family. EF-G/EF-2 subfamily.

Its subcellular location is the cytoplasm. In terms of biological role, catalyzes the GTP-dependent ribosomal translocation step during translation elongation. During this step, the ribosome changes from the pre-translocational (PRE) to the post-translocational (POST) state as the newly formed A-site-bound peptidyl-tRNA and P-site-bound deacylated tRNA move to the P and E sites, respectively. Catalyzes the coordinated movement of the two tRNA molecules, the mRNA and conformational changes in the ribosome. This is Elongation factor G (fus) from Streptococcus pyogenes serotype M1.